The sequence spans 227 residues: Broad specificity amino-acid racemase RacX (227 aa).

Position 51–53 (51–53 (DRP)) interacts with substrate. Cys82 functions as the Proton donor/acceptor in the catalytic mechanism. Residues 83–85 (NTA) and Lys161 contribute to the substrate site. Cys191 acts as the Proton donor/acceptor in catalysis.

Belongs to the aspartate/glutamate racemases family. In terms of assembly, homodimer.

The enzyme catalyses an L-alpha-amino acid = a D-alpha-amino acid. The catalysed reaction is (2S,6S)-2,6-diaminopimelate = meso-2,6-diaminopimelate. It carries out the reaction L-lysine = D-lysine. It catalyses the reaction L-arginine = D-arginine. The enzyme catalyses L-ornithine = D-ornithine. The catalysed reaction is L-histidine = D-histidine. It carries out the reaction L-alanine = D-alanine. It catalyses the reaction L-tyrosine = D-tyrosine. The enzyme catalyses L-phenylalanine = D-phenylalanine. The catalysed reaction is L-serine = D-serine. It carries out the reaction L-glutamine = D-glutamine. It catalyses the reaction L-methionine = D-methionine. The enzyme catalyses L-asparagine = D-asparagine. The catalysed reaction is L-homoserine = D-homoserine. Functionally, amino-acid racemase able to utilize a broad range of substrates. Preferentially catalyzes the epimerization of LL-diaminopimelate, as well as the racemization of D-lysine, L-arginine, L-ornithine, L-lysine and D-arginine. Has lower activity against D-ornithine, L-histidine, L-alanine, L-tyrosine, L-phenylalanine, L-serine, L-glutamine, L-methionine, L-asparagine and L-homoserine. Has weak activity against L-norleucine, L-aminobutyric acid and L-norvaline. Has no activity toward nine L-amino acids (Thr, Glu, Asp, Val, Leu, Ile, Trp, Cit and Aad). D-amino acids might be used as components of peptidoglycan and/or be involved in peptidoglycan metabolism and remodeling. The sequence is that of Broad specificity amino-acid racemase RacX (racX) from Bacillus subtilis (strain 168).